Reading from the N-terminus, the 253-residue chain is Uridylate kinase (253 aa).

ATP is bound at residue 9-12 (KLSG). Residue glycine 51 coordinates UMP. Glycine 52 and arginine 56 together coordinate ATP. UMP is bound by residues aspartate 72 and 133 to 140 (SGNPFFTT). Residues threonine 160, tyrosine 166, and aspartate 169 each coordinate ATP.

Belongs to the UMP kinase family. In terms of assembly, homohexamer.

The protein localises to the cytoplasm. It catalyses the reaction UMP + ATP = UDP + ADP. It functions in the pathway pyrimidine metabolism; CTP biosynthesis via de novo pathway; UDP from UMP (UMPK route): step 1/1. With respect to regulation, inhibited by UTP. Functionally, catalyzes the reversible phosphorylation of UMP to UDP. In Synechococcus sp. (strain JA-2-3B'a(2-13)) (Cyanobacteria bacterium Yellowstone B-Prime), this protein is Uridylate kinase.